The following is a 162-amino-acid chain: Phosphopantetheine adenylyltransferase (162 aa).

Threonine 9 serves as a coordination point for substrate. ATP-binding positions include 9–10 and histidine 17; that span reads TF. Residues lysine 41, leucine 77, and arginine 91 each contribute to the substrate site. ATP is bound by residues 92-94, glutamate 102, and 127-133; these read GLR and RQAIASK.

This sequence belongs to the bacterial CoaD family. In terms of assembly, homohexamer. Mg(2+) serves as cofactor.

The protein resides in the cytoplasm. The enzyme catalyses (R)-4'-phosphopantetheine + ATP + H(+) = 3'-dephospho-CoA + diphosphate. The protein operates within cofactor biosynthesis; coenzyme A biosynthesis; CoA from (R)-pantothenate: step 4/5. In terms of biological role, reversibly transfers an adenylyl group from ATP to 4'-phosphopantetheine, yielding dephospho-CoA (dPCoA) and pyrophosphate. The chain is Phosphopantetheine adenylyltransferase from Cereibacter sphaeroides (strain ATCC 17029 / ATH 2.4.9) (Rhodobacter sphaeroides).